A 245-amino-acid polypeptide reads, in one-letter code: Orotidine 5'-phosphate decarboxylase (245 aa).

Residues Asp22, Lys44, 71 to 80 (DLKFHDIPNT), Thr131, Arg192, Gln201, Gly221, and Arg222 contribute to the substrate site. Residue Lys73 is the Proton donor of the active site.

Belongs to the OMP decarboxylase family. Type 1 subfamily. In terms of assembly, homodimer.

The catalysed reaction is orotidine 5'-phosphate + H(+) = UMP + CO2. The protein operates within pyrimidine metabolism; UMP biosynthesis via de novo pathway; UMP from orotate: step 2/2. Functionally, catalyzes the decarboxylation of orotidine 5'-monophosphate (OMP) to uridine 5'-monophosphate (UMP). The sequence is that of Orotidine 5'-phosphate decarboxylase from Shigella flexneri.